The primary structure comprises 247 residues: Ras-like protein family member 11B (247 aa).

The small GTPase-like stretch occupies residues 28-245 (AGRRLVKIAV…ALSAKVRTVT (218 aa)). GTP-binding positions include 39 to 46 (GASGVGKT), 86 to 93 (DTPGIQVH), and 151 to 154 (NKAD). Residues 202–228 (PKQQPSSTPEKRRTSLIPRPKSPNMQD) form a disordered region.

It belongs to the small GTPase superfamily. Ras family.

It carries out the reaction GTP + H2O = GDP + phosphate + H(+). The protein is Ras-like protein family member 11B of Mus musculus (Mouse).